Reading from the N-terminus, the 508-residue chain is ATP synthase subunit alpha (508 aa).

170–177 (GDRQTGKT) contributes to the ATP binding site.

This sequence belongs to the ATPase alpha/beta chains family. F-type ATPases have 2 components, CF(1) - the catalytic core - and CF(0) - the membrane proton channel. CF(1) has five subunits: alpha(3), beta(3), gamma(1), delta(1), epsilon(1). CF(0) has three main subunits: a(1), b(2) and c(9-12). The alpha and beta chains form an alternating ring which encloses part of the gamma chain. CF(1) is attached to CF(0) by a central stalk formed by the gamma and epsilon chains, while a peripheral stalk is formed by the delta and b chains.

The protein resides in the cell inner membrane. It catalyses the reaction ATP + H2O + 4 H(+)(in) = ADP + phosphate + 5 H(+)(out). Produces ATP from ADP in the presence of a proton gradient across the membrane. The alpha chain is a regulatory subunit. This Dictyoglomus turgidum (strain DSM 6724 / Z-1310) protein is ATP synthase subunit alpha.